Here is a 446-residue protein sequence, read N- to C-terminus: NAD(P)H sulfur oxidoreductase (CoA-dependent) (446 aa).

17–18 (AA) is a binding site for FAD. Residue arginine 28 participates in CoA binding. Residues 39–40 (EA) and 46–48 (HAP) each bind FAD. CoA-binding positions include 45 to 49 (SHAPC), 66 to 67 (HY), and arginine 76. The active-site Redox-active is the cysteine 49. Positions 86, 284, and 302 each coordinate FAD. 2 residues coordinate CoA: asparagine 306 and lysine 362. Residue tyrosine 426 coordinates FAD. CoA is bound by residues tryptophan 434 and arginine 442.

Belongs to the class-III pyridine nucleotide-disulfide oxidoreductase family. FAD serves as cofactor.

It carries out the reaction hydrogen sulfide + NADP(+) = sulfur + NADPH. The catalysed reaction is hydrogen sulfide + NAD(+) = sulfur + NADH. Its function is as follows. Catalyzes the CoA-dependent reduction of elemental sulfur (S(0)) to produce hydrogen sulfide. The sequence is that of NAD(P)H sulfur oxidoreductase (CoA-dependent) from Pyrococcus abyssi (strain GE5 / Orsay).